We begin with the raw amino-acid sequence, 561 residues long: MACPF domain-containing protein CAD1 (561 aa).

One can recognise an MACPF domain in the interval 11–314 (VPSSEALTTT…PPIEDLQYFL (304 aa)). The segment at 489–514 (VASSGRLEPGGPSTSSSTEEVSGQSG) is disordered. Residues 500-513 (PSTSSSTEEVSGQS) are compositionally biased toward polar residues.

The protein belongs to the complement C6/C7/C8/C9 (TC 1.C.39) family. In terms of tissue distribution, mainly expressed in the vascular system.

Negatively controls the salicylic acid (SA)-mediated pathway of programmed cell death in plant immunity. The protein is MACPF domain-containing protein CAD1 (CAD1) of Arabidopsis thaliana (Mouse-ear cress).